We begin with the raw amino-acid sequence, 543 residues long: CTP synthase (543 aa).

The interval 1–270 (MNNLTSTKFI…DTQILKHFNI (270 aa)) is amidoligase domain. A CTP-binding site is contributed by Ser-18. Ser-18 is a UTP binding site. ATP is bound by residues 19–24 (SLGKGL) and Asp-76. Positions 76 and 144 each coordinate Mg(2+). CTP is bound by residues 151–153 (DIE), 191–196 (KTKPTQ), and Lys-227. Residues 191–196 (KTKPTQ) and Lys-227 contribute to the UTP site. Residues 295-537 (TIAIIGKYIK…IQASLNYQET (243 aa)) enclose the Glutamine amidotransferase type-1 domain. Residue Gly-356 participates in L-glutamine binding. Cys-383 serves as the catalytic Nucleophile; for glutamine hydrolysis. L-glutamine is bound by residues 384-387 (MGMQ), Glu-407, and Arg-462. Residues His-510 and Glu-512 contribute to the active site.

Belongs to the CTP synthase family. In terms of assembly, homotetramer.

The enzyme catalyses UTP + L-glutamine + ATP + H2O = CTP + L-glutamate + ADP + phosphate + 2 H(+). The catalysed reaction is L-glutamine + H2O = L-glutamate + NH4(+). It carries out the reaction UTP + NH4(+) + ATP = CTP + ADP + phosphate + 2 H(+). The protein operates within pyrimidine metabolism; CTP biosynthesis via de novo pathway; CTP from UDP: step 2/2. With respect to regulation, allosterically activated by GTP, when glutamine is the substrate; GTP has no effect on the reaction when ammonia is the substrate. The allosteric effector GTP functions by stabilizing the protein conformation that binds the tetrahedral intermediate(s) formed during glutamine hydrolysis. Inhibited by the product CTP, via allosteric rather than competitive inhibition. Its function is as follows. Catalyzes the ATP-dependent amination of UTP to CTP with either L-glutamine or ammonia as the source of nitrogen. Regulates intracellular CTP levels through interactions with the four ribonucleotide triphosphates. The chain is CTP synthase from Ehrlichia ruminantium (strain Gardel).